Here is an 873-residue protein sequence, read N- to C-terminus: Zinc fingers and homeoboxes protein 1 (873 aa).

Thr-36 is modified (phosphothreonine). A disordered region spans residues 41–63 (AKAESVSSDEEVHGSVDSDNQQN). Phosphoserine occurs at positions 45, 47, and 48. Positions 50 to 63 (EEVHGSVDSDNQQN) are enriched in basic and acidic residues. 2 C2H2-type zinc fingers span residues 70–93 (YECK…DSEH) and 102–125 (YVCV…LKYH). A Glycyl lysine isopeptide (Lys-Gly) (interchain with G-Cter in SUMO2) cross-link involves residue Lys-159. Residues 198-247 (VHHNSAEGTSEEKENGVKASQEENAESVSSSALESNTSTSTINRVHPSPA) form a disordered region. Residue Ser-202 is modified to Phosphoserine. A compositionally biased stretch (low complexity) spans 223–238 (ESVSSSALESNTSTST). The required for dimerization stretch occupies residues 272–432 (NSNLLPKVLI…QTNVQKSQVP (161 aa)). Residues 272-564 (NSNLLPKVLI…SQQKQSWNPF (293 aa)) are required for interaction with NFYA. The homeobox 1 DNA-binding region spans 284–346 (NSIPTYNAAL…LKHGVSWTPE (63 aa)). Positions 429 to 456 (SQVPAAQPATDTKPATAAVPSSPSVRPE) are disordered. Residues Lys-441 and Lys-485 each participate in a glycyl lysine isopeptide (Lys-Gly) (interchain with G-Cter in SUMO2) cross-link. Residues 464–526 (SFGIRAKKTK…YNQRNSKSNQ (63 aa)) constitute a DNA-binding region (homeobox 2). Disordered stretches follow at residues 541 to 568 (DSSD…PDFA), 627 to 668 (DEKI…CKKT), and 731 to 767 (SSSL…KRMN). The homeobox 3 DNA-binding region spans 569 to 630 (PQKFKEKTAE…KTKALKDEKI (62 aa)). Lys-629 is covalently cross-linked (Glycyl lysine isopeptide (Lys-Gly) (interchain with G-Cter in SUMO2)). At Ser-648 the chain carries Phosphoserine. A DNA-binding region (homeobox 4) is located at residues 660–722 (GTGKICKKTP…YAWKNGNLKW (63 aa)). Residues 734-768 (LNGLSSLRRRGRGRPKGRGRGRPRGRPRGGKRMNT) form a required for nuclear localization region. Residues 740–764 (LRRRGRGRPKGRGRGRPRGRPRGGK) show a composition bias toward basic residues. At Ser-774 the chain carries Phosphoserine. Residues 777-832 (KFKTGTAILKDYYLKHKFLNEQDLDELVNRSHMGYEQVREWFAERQRRSELGIELF) constitute a DNA-binding region (homeobox 5). The disordered stretch occupies residues 829–873 (IELFEENEEEDEVVDDQEEDEEETDDSDTWEPPRHVKRKLSKSDD). Acidic residues predominate over residues 831-857 (LFEENEEEDEVVDDQEEDEEETDDSDT). The tract at residues 831–873 (LFEENEEEDEVVDDQEEDEEETDDSDTWEPPRHVKRKLSKSDD) is required for repressor activity. Residues 863–873 (HVKRKLSKSDD) show a composition bias toward basic residues.

This sequence belongs to the ZHX family. In terms of assembly, forms homodimers. Heterodimer (via HD1 domain) with ZHX2 (via HD1 domain). Also forms a heterodimer with ZHX3 which is a prerequisite for repressor activity. Interacts with ATF7IP and NFYA. Interacts (via homeobox domains) with DNMT3B (via PWWP domain). As to expression, widely expressed with highest levels in brain.

The protein resides in the nucleus. Acts as a transcriptional repressor. Increases DNMT3B-mediated repressive transcriptional activity when DNMT3B is tethered to DNA. May link molecule between DNMT3B and other co-repressor proteins. This Mus musculus (Mouse) protein is Zinc fingers and homeoboxes protein 1 (Zhx1).